Reading from the N-terminus, the 231-residue chain is Orotidine 5'-phosphate decarboxylase (231 aa).

Substrate contacts are provided by residues Asp-11, Lys-33, 60-69, Thr-120, Arg-181, Gln-190, Gly-210, and Arg-211; that span reads DLKFHDIPNT. The Proton donor role is filled by Lys-62.

It belongs to the OMP decarboxylase family. Type 1 subfamily. Homodimer.

The catalysed reaction is orotidine 5'-phosphate + H(+) = UMP + CO2. Its pathway is pyrimidine metabolism; UMP biosynthesis via de novo pathway; UMP from orotate: step 2/2. Its function is as follows. Catalyzes the decarboxylation of orotidine 5'-monophosphate (OMP) to uridine 5'-monophosphate (UMP). In Vibrio cholerae serotype O1 (strain ATCC 39315 / El Tor Inaba N16961), this protein is Orotidine 5'-phosphate decarboxylase.